A 348-amino-acid polypeptide reads, in one-letter code: Phosphoribosylformylglycinamidine cyclo-ligase (348 aa).

It belongs to the AIR synthase family.

It is found in the cytoplasm. It catalyses the reaction 2-formamido-N(1)-(5-O-phospho-beta-D-ribosyl)acetamidine + ATP = 5-amino-1-(5-phospho-beta-D-ribosyl)imidazole + ADP + phosphate + H(+). It functions in the pathway purine metabolism; IMP biosynthesis via de novo pathway; 5-amino-1-(5-phospho-D-ribosyl)imidazole from N(2)-formyl-N(1)-(5-phospho-D-ribosyl)glycinamide: step 2/2. The polypeptide is Phosphoribosylformylglycinamidine cyclo-ligase (Sorangium cellulosum (strain So ce56) (Polyangium cellulosum (strain So ce56))).